Reading from the N-terminus, the 300-residue chain is 3-dehydrocarnitine:acetyl-CoA trimethylamine transferase (300 aa).

Zn(2+) is bound by residues H51, H53, and E254.

Belongs to the BKACE family. As to quaternary structure, homotetramer. The cofactor is Zn(2+).

It carries out the reaction 3-dehydrocarnitine + acetyl-CoA = N,N,N-trimethylglycyl-CoA + acetoacetate. It participates in amine and polyamine metabolism; carnitine metabolism. Its function is as follows. Catalyzes the condensation of dehydrocarnitine and acetyl-CoA, forming acetoacetate and betainyl-CoA (N,N,N-trimethylglycyl-CoA). Is involved in a L-carnitine degradation pathway that allows R.meliloti to grow on L-carnitine as the sole source of carbon and nitrogen. This Rhizobium meliloti (strain 1021) (Ensifer meliloti) protein is 3-dehydrocarnitine:acetyl-CoA trimethylamine transferase.